We begin with the raw amino-acid sequence, 631 residues long: Interferon-induced GTP-binding protein Mx1 (631 aa).

One can recognise a Dynamin-type G domain in the interval 33 to 306; the sequence is DLALPAIAVI…LTSHICKSLP (274 aa). The tract at residues 43-50 is G1 motif; that stretch reads GDQSSGKS. 43–50 provides a ligand contact to GTP; the sequence is GDQSSGKS. The segment at 68–70 is G2 motif; it reads VTR. A G3 motif region spans residues 144-147; it reads DLPG. GTP-binding positions include 144-148 and 213-216; these read DLPGI and TKPD. The interval 213-216 is G4 motif; the sequence is TKPD. Residues 245–248 are G5 motif; the sequence is KCRG. The bundle signaling element (BSE) stretch occupies residues 307–332; sequence LLEDQINSSHQSASEELQKYGADIPE. Residues 332–499 form a middle domain region; sequence EDDRTRMSFL…HFQMEQIVYC (168 aa). The tract at residues 333–601 is stalk; it reads DDRTRMSFLV…TSKCSWFLEE (269 aa). The interval 520–522 is critical for lipid-binding; the sequence is KTK. Positions 543-631 constitute a GED domain; the sequence is TTEMTQHLKA…ARQKLAKFSD (89 aa).

Belongs to the TRAFAC class dynamin-like GTPase superfamily. Dynamin/Fzo/YdjA family. In terms of assembly, homooligomer. Oligomerizes into multimeric filamentous or ring-like structures by virtue of its stalk domain. Oligomerization is critical for GTPase activity, protein stability, and recognition of viral target structures. Interacts with TRPC1, TRPC3, TRPC4, TRPC5, TRPC6 and TRPC7. Interacts with HSPA5. Interacts with TUBB/TUBB5. Interacts with DDX39A and DDX39B. In terms of processing, ISGylated.

It localises to the cytoplasm. The protein localises to the nucleus. The protein resides in the endoplasmic reticulum membrane. Its subcellular location is the perinuclear region. Interferon-induced dynamin-like GTPase with antiviral activity against influenza A virus, (IAV), influenza B virus (IBV) and Thogoto virus (THOV). Inhibits FLUAV by interfering with the process of primary transcription, probably by affecting the viral polymerase function. In Mus musculus (Mouse), this protein is Interferon-induced GTP-binding protein Mx1 (Mx1).